The chain runs to 160 residues: Cyanate hydratase (160 aa).

Active-site residues include Arg100, Glu103, and Ser126.

The protein belongs to the cyanase family.

The enzyme catalyses cyanate + hydrogencarbonate + 3 H(+) = NH4(+) + 2 CO2. Functionally, catalyzes the reaction of cyanate with bicarbonate to produce ammonia and carbon dioxide. The chain is Cyanate hydratase from Neosartorya fischeri (strain ATCC 1020 / DSM 3700 / CBS 544.65 / FGSC A1164 / JCM 1740 / NRRL 181 / WB 181) (Aspergillus fischerianus).